The following is a 334-amino-acid chain: AT-hook motif nuclear-localized protein 2 (334 aa).

The segment covering 1-21 has biased composition (low complexity); the sequence is METTGEVVKTTTGSDGGVTVV. Disordered regions lie at residues 1-103 and 109-128; these read METT…PTTS and STTS…PSSF. A compositionally biased stretch (pro residues) spans 44–54; sequence SVAPPPPPPPQ. Basic residues predominate over residues 71–80; sequence IKKRRGRPRK. Residues 72-80 carry the Bipartite nuclear localization signal motif; it reads KKRRGRPRK. A DNA-binding region (a.T hook) is located at residues 72-84; the sequence is KKRRGRPRKYGHD. Polar residues predominate over residues 90–103; the sequence is LSPNPISSAAPTTS. The 141-residue stretch at 147-287 folds into the PPC domain; it reads AANFTPHIIT…PHNHNFMSSP (141 aa). The segment covering 306-319 has biased composition (polar residues); it reads SSLPISTWTPSFPS. Residues 306-334 are disordered; sequence SSLPISTWTPSFPSDSRHKHSHDFNITLT.

It localises to the nucleus. Functionally, transcription factor that specifically binds AT-rich DNA sequences related to the nuclear matrix attachment regions (MARs). This chain is AT-hook motif nuclear-localized protein 2, found in Arabidopsis thaliana (Mouse-ear cress).